Here is a 377-residue protein sequence, read N- to C-terminus: Iris (377 aa).

N-linked (GlcNAc...) asparagine glycans are attached at residues Asn-11 and Asn-226.

It belongs to the serpin family. As to expression, female saliva (at protein level). Female salivary gland (at protein level).

It localises to the secreted. Serine protease inhibitor with anticoagulant and immunosuppressive properties that can modulate blood feeding of ticks on vertebrate species. Strongly inhibits human leukocyte elastase (ELANE) and porcine pancreatic elastase. Moderately inhibits human tPA/tissue-type plasminogen activator (PLAT), coagulation factor Xa (F10), thrombin (F2) and trypsin. Does not inhibit human plasmin (PLG). Inhibits platelet aggregation. Inhibits the intrinsic pathway of blood coagulation in the host. Inhibits fibrinolysis in the host. Inhibits proliferation of mouse splenocytes. Decreases the number of IFN-gamma (IFNG)-producing human peripheral blood mononuclear cells (PBMCs) after stimulation with phytohemagglutinin A (PHA). Increases the number of IL10-producing human PBMCs after stimulation with lipopolysaccharides (LPS) with no significant effect on IL10 production. Inhibits production of IFNG, IL6, TNF-alpha (TNF) and CXCL8 by human PBMCs. Binds to monocyte/macrophage subpopulation of the host PBMCs. Increases both survival rate and survival time in mice with LPS-induced endotoxemic shock. The polypeptide is Iris (Ixodes ricinus (Common tick)).